Consider the following 4555-residue polypeptide: Protocadherin Fat 3 (4555 aa).

An N-terminal signal peptide occupies residues 1–31; the sequence is MGVTMRHCIDTRPPSCLIFLLLKLCATVSQG. The Extracellular segment spans residues 32-4153; sequence LPGTGPLGFH…AGHSYVGKEE (4122 aa). Cadherin domains are found at residues 43 to 157, 158 to 265, 263 to 374, 376 to 471, 472 to 577, 578 to 680, 726 to 830, 831 to 935, 936 to 1042, 1043 to 1147, 1148 to 1253, 1254 to 1358, 1362 to 1459, 1460 to 1565, 1566 to 1768, 1769 to 1882, 1883 to 1985, 1982 to 2083, 2084 to 2185, 2186 to 2286, 2287 to 2393, 2394 to 2495, 2496 to 2599, 2600 to 2707, 2708 to 2813, 2814 to 2923, 2924 to 3028, 3029 to 3130, 3131 to 3235, 3236 to 3340, 3341 to 3445, 3446 to 3550, and 3551 to 3652; these read THAL…RPLF, SPTT…APII, PIIH…TPIK, EKDV…TPEF, QETL…SPLF, EKVA…SKSF, KSFP…SPVF, LQDS…SPAF, IPSS…TPYF, PDFA…APLT, SEPI…KPQF, PEKV…SPIP, DEPF…GPEF, SQPH…SPYF, TNPL…PPVF, LFSQ…PPVF, TQAV…TQSF, TQSF…SPVF, VGLP…MPVF, DKPF…PPVF, DQPT…PPVF, NQLI…SPAF, SQST…APQF, MTLE…LPSF, TQSQ…KPVF, ETSS…APVF, AHEV…SPVC, DQVA…PPVF, SSNH…PPVF, ERRD…PPRF, SQDV…SPVF, TPAN…KPTA, and IPLE…TIRF. N48 carries N-linked (GlcNAc...) asparagine glycosylation. N341 is a glycosylation site (N-linked (GlcNAc...) asparagine). N-linked (GlcNAc...) asparagine glycans are attached at residues N481, N562, N667, N799, N879, N898, and N1006. 2 N-linked (GlcNAc...) asparagine glycosylation sites follow: N1367 and N1429. Residue N1751 is glycosylated (N-linked (GlcNAc...) asparagine). N1944, N1993, and N1996 each carry an N-linked (GlcNAc...) asparagine glycan. N-linked (GlcNAc...) asparagine glycosylation is found at N2208, N2292, N2331, and N2467. An N-linked (GlcNAc...) asparagine glycan is attached at N2734. An N-linked (GlcNAc...) asparagine glycan is attached at N3000. A glycan (N-linked (GlcNAc...) asparagine) is linked at N3201. N-linked (GlcNAc...) asparagine glycans are attached at residues N3449, N3618, and N3741. One can recognise an EGF-like 1 domain in the interval 3794-3832; that stretch reads SNDPCVEKPCPEDMQCVGYEASRRPFLCQCPPGKLGECS. 3 cysteine pairs are disulfide-bonded: C3798–C3809, C3803–C3821, and C3823–C3831. In terms of domain architecture, Laminin G-like spans 3834-4017; sequence HTSLSFAGNS…VGLTELKLGC (184 aa). N-linked (GlcNAc...) asparagine glycosylation occurs at N3926. Intrachain disulfides connect C3984/C4017, C4024/C4035, C4029/C4045, C4047/C4056, C4063/C4074, C4068/C4083, C4085/C4094, C4101/C4112, C4106/C4121, and C4123/C4132. EGF-like domains are found at residues 4020–4057 and 4059–4095; these read YPDA…TNCE and EITA…VTCE. The EGF-like 4; calcium-binding domain occupies 4097–4133; the sequence is DVDECEREECENGGSCVNLFGSFFCNCTPGYVGQYCG. Residues 4154–4174 form a helical membrane-spanning segment; that stretch reads LIGIAVVLFVIFTLIVLFIVF. The Cytoplasmic portion of the chain corresponds to 4175–4555; sequence RKKVFRKNYS…FVETQHQTQV (381 aa). Over residues 4326 to 4343 the composition is skewed to polar residues; that stretch reads SNKGSNSEVQSLNSFQSD. Disordered stretches follow at residues 4326–4347, 4395–4424, and 4452–4472; these read SNKG…SGDD, GGYD…LPED, and PRFH…TDLG. Omega-N-methylarginine occurs at positions 4508 and 4518.

Restricted to the nervous system. Abundantly expressed in the fetal brain.

The protein resides in the membrane. In terms of biological role, may play a role in the interactions between neurites derived from specific subsets of neurons during development. This Rattus norvegicus (Rat) protein is Protocadherin Fat 3 (Fat3).